The sequence spans 404 residues: Probable tRNA sulfurtransferase (404 aa).

Positions 60 to 165 (QPIVEALKLV…DEAAYISYEE (106 aa)) constitute a THUMP domain. ATP is bound by residues 183-184 (ML), 208-209 (HF), R265, G287, and Q296.

It belongs to the ThiI family.

It localises to the cytoplasm. It catalyses the reaction [ThiI sulfur-carrier protein]-S-sulfanyl-L-cysteine + a uridine in tRNA + 2 reduced [2Fe-2S]-[ferredoxin] + ATP + H(+) = [ThiI sulfur-carrier protein]-L-cysteine + a 4-thiouridine in tRNA + 2 oxidized [2Fe-2S]-[ferredoxin] + AMP + diphosphate. The enzyme catalyses [ThiS sulfur-carrier protein]-C-terminal Gly-Gly-AMP + S-sulfanyl-L-cysteinyl-[cysteine desulfurase] + AH2 = [ThiS sulfur-carrier protein]-C-terminal-Gly-aminoethanethioate + L-cysteinyl-[cysteine desulfurase] + A + AMP + 2 H(+). Its pathway is cofactor biosynthesis; thiamine diphosphate biosynthesis. Catalyzes the ATP-dependent transfer of a sulfur to tRNA to produce 4-thiouridine in position 8 of tRNAs, which functions as a near-UV photosensor. Also catalyzes the transfer of sulfur to the sulfur carrier protein ThiS, forming ThiS-thiocarboxylate. This is a step in the synthesis of thiazole, in the thiamine biosynthesis pathway. The sulfur is donated as persulfide by IscS. This chain is Probable tRNA sulfurtransferase, found in Streptococcus pyogenes serotype M49 (strain NZ131).